The sequence spans 222 residues: Ribosome maturation factor RimM (222 aa).

Residues methionine 1–glutamate 22 form a disordered region. The 78-residue stretch at glutamate 145–tyrosine 222 folds into the PRC barrel domain.

The protein belongs to the RimM family. Binds ribosomal protein uS19.

The protein localises to the cytoplasm. In terms of biological role, an accessory protein needed during the final step in the assembly of 30S ribosomal subunit, possibly for assembly of the head region. Essential for efficient processing of 16S rRNA. May be needed both before and after RbfA during the maturation of 16S rRNA. It has affinity for free ribosomal 30S subunits but not for 70S ribosomes. The chain is Ribosome maturation factor RimM from Cupriavidus necator (strain ATCC 17699 / DSM 428 / KCTC 22496 / NCIMB 10442 / H16 / Stanier 337) (Ralstonia eutropha).